Consider the following 196-residue polypeptide: ATP-dependent Clp protease proteolytic subunit 1 (196 aa).

Residue Ser-96 is the Nucleophile of the active site. His-121 is an active-site residue.

It belongs to the peptidase S14 family. Fourteen ClpP subunits assemble into 2 heptameric rings which stack back to back to give a disk-like structure with a central cavity, resembling the structure of eukaryotic proteasomes.

It is found in the cytoplasm. It catalyses the reaction Hydrolysis of proteins to small peptides in the presence of ATP and magnesium. alpha-casein is the usual test substrate. In the absence of ATP, only oligopeptides shorter than five residues are hydrolyzed (such as succinyl-Leu-Tyr-|-NHMec, and Leu-Tyr-Leu-|-Tyr-Trp, in which cleavage of the -Tyr-|-Leu- and -Tyr-|-Trp bonds also occurs).. Functionally, cleaves peptides in various proteins in a process that requires ATP hydrolysis. Has a chymotrypsin-like activity. Plays a major role in the degradation of misfolded proteins. This is ATP-dependent Clp protease proteolytic subunit 1 from Prochlorococcus marinus (strain NATL2A).